Reading from the N-terminus, the 548-residue chain is Chaperonin GroEL (548 aa).

ATP contacts are provided by residues Thr-29–Pro-32, Asp-86–Thr-90, Gly-413, Asn-476–Leu-478, and Asp-492. The segment covering Pro-522–Asp-531 has biased composition (acidic residues). The tract at residues Pro-522–Met-548 is disordered. Residues Met-532 to Met-548 show a composition bias toward gly residues.

It belongs to the chaperonin (HSP60) family. In terms of assembly, forms a cylinder of 14 subunits composed of two heptameric rings stacked back-to-back. Interacts with the co-chaperonin GroES.

The protein resides in the cytoplasm. The enzyme catalyses ATP + H2O + a folded polypeptide = ADP + phosphate + an unfolded polypeptide.. Together with its co-chaperonin GroES, plays an essential role in assisting protein folding. The GroEL-GroES system forms a nano-cage that allows encapsulation of the non-native substrate proteins and provides a physical environment optimized to promote and accelerate protein folding. This is Chaperonin GroEL from Natranaerobius thermophilus (strain ATCC BAA-1301 / DSM 18059 / JW/NM-WN-LF).